A 193-amino-acid polypeptide reads, in one-letter code: MTIKLIVGLGNPGKNYKYHRHNVGFWFCDALAKLYAGNFKKRTKFFGEVTQINIFNHKIQLLKPTTFMNCSGQSIQSIANFYQINADEILIVHDELNINPGIAKIKSGGSHGGHNGLKNTIKILETKAFYRLRIGIGHPGNKLPIVDFVLNTPSKDELDKIQNALNNSLQVIEDVIKNNLDKVIKTLQKKEII.

Residue tyrosine 16 participates in tRNA binding. The active-site Proton acceptor is the histidine 21. 3 residues coordinate tRNA: phenylalanine 67, asparagine 69, and asparagine 115.

It belongs to the PTH family. Monomer.

The protein resides in the cytoplasm. The enzyme catalyses an N-acyl-L-alpha-aminoacyl-tRNA + H2O = an N-acyl-L-amino acid + a tRNA + H(+). Hydrolyzes ribosome-free peptidyl-tRNAs (with 1 or more amino acids incorporated), which drop off the ribosome during protein synthesis, or as a result of ribosome stalling. Functionally, catalyzes the release of premature peptidyl moieties from peptidyl-tRNA molecules trapped in stalled 50S ribosomal subunits, and thus maintains levels of free tRNAs and 50S ribosomes. This Vesicomyosocius okutanii subsp. Calyptogena okutanii (strain HA) protein is Peptidyl-tRNA hydrolase.